The following is a 143-amino-acid chain: Glutaredoxin-2 (143 aa).

The transit peptide at 1–30 directs the protein to the mitochondrion; it reads METNFSFDSNLIVIIIITLFATRIIAKRFL. Ser-37 bears the Phosphoserine mark. In terms of domain architecture, Glutaredoxin spans 41-143; sequence VAHVKDLIGQ…LAEILKPVFQ (103 aa). 58–63 contributes to the glutathione binding site; that stretch reads KTYCPY. Cys-61 is subject to S-glutathionyl cysteine; alternate. A disulfide bridge connects residues Cys-61 and Cys-64. Position 91 is a phosphoserine (Ser-91). Glutathione contacts are provided by residues Val-109 and 122-123; that span reads NS.

Belongs to the glutaredoxin family.

It localises to the cytoplasm. Its subcellular location is the mitochondrion. It catalyses the reaction 2 glutathione + H2O2 = glutathione disulfide + 2 H2O. The enzyme catalyses 1-chloro-2,4-dinitrobenzene + glutathione = 2,4-dinitrophenyl-S-glutathione + chloride + H(+). It carries out the reaction RX + glutathione = an S-substituted glutathione + a halide anion + H(+). Functionally, component of the glutathione system which performs several activities such as glutathione-dependent oxidoreductase, glutathione peroxidase and glutathione S-transferase (GST) activity. The disulfide bond functions as an electron carrier in the glutathione-dependent synthesis of deoxyribonucleotides by the enzyme ribonucleotide reductase. In addition, it is also involved in reducing cytosolic protein- and non-protein-disulfides in a coupled system with glutathione reductase. Required for resistance to reactive oxygen species (ROS) by directly reducing hydroperoxides and for the detoxification of ROS-mediated damage. GRX2 is more active as an oxidoreductase than GRX1. Responsible for the S-glutathionylation of DHBP synthase. The protein is Glutaredoxin-2 (GRX2) of Saccharomyces cerevisiae (strain ATCC 204508 / S288c) (Baker's yeast).